The primary structure comprises 209 residues: Glycerol-3-phosphate acyltransferase (209 aa).

A run of 5 helical transmembrane segments spans residues 4-24, 53-75, 80-102, 112-132, and 138-158; these read IAIGMIIFAYLCGSVSNAILI, LAAAGVMVFDVLKGMIPVWIGYG, PFWLGLVAIAACLGHIYPIFFHF, LGAIAPIGYDLSGLMIGTWLL, and GYSSLGAIVSALIAPFYVWWF.

Belongs to the PlsY family. Probably interacts with PlsX.

It is found in the cell inner membrane. It carries out the reaction an acyl phosphate + sn-glycerol 3-phosphate = a 1-acyl-sn-glycero-3-phosphate + phosphate. Its pathway is lipid metabolism; phospholipid metabolism. Its function is as follows. Catalyzes the transfer of an acyl group from acyl-phosphate (acyl-PO(4)) to glycerol-3-phosphate (G3P) to form lysophosphatidic acid (LPA). This enzyme utilizes acyl-phosphate as fatty acyl donor, but not acyl-CoA or acyl-ACP. This Sodalis glossinidius (strain morsitans) protein is Glycerol-3-phosphate acyltransferase.